A 149-amino-acid polypeptide reads, in one-letter code: Cytochrome c-556 (149 aa).

The N-terminal stretch at methionine 1–alanine 20 is a signal peptide. Residues methionine 32, cysteine 137, cysteine 140, and histidine 141 each contribute to the heme c site.

As to quaternary structure, monomer. Binds 1 heme c group covalently per subunit.

In terms of biological role, low-spin monoheme cytochrome c. This chain is Cytochrome c-556, found in Rhodopseudomonas palustris (strain ATCC BAA-98 / CGA009).